The sequence spans 864 residues: Protein translocase subunit SecA (864 aa).

ATP is bound by residues Q87, 105–109 (GEGKT), and D512.

This sequence belongs to the SecA family. Monomer and homodimer. Part of the essential Sec protein translocation apparatus which comprises SecA, SecYEG and auxiliary proteins SecDF-YajC and YidC.

The protein localises to the cell inner membrane. The protein resides in the cytoplasm. It catalyses the reaction ATP + H2O + cellular proteinSide 1 = ADP + phosphate + cellular proteinSide 2.. Part of the Sec protein translocase complex. Interacts with the SecYEG preprotein conducting channel. Has a central role in coupling the hydrolysis of ATP to the transfer of proteins into and across the cell membrane, serving as an ATP-driven molecular motor driving the stepwise translocation of polypeptide chains across the membrane. This chain is Protein translocase subunit SecA, found in Buchnera aphidicola subsp. Cinara cedri (strain Cc).